A 399-amino-acid chain; its full sequence is Probable tRNA sulfurtransferase (399 aa).

The 106-residue stretch at 60-165 (YAVMERLKRV…TEGTYISCET (106 aa)) folds into the THUMP domain. Residues 183–184 (LL), 208–209 (HF), arginine 265, glycine 287, and glutamine 296 contribute to the ATP site.

It belongs to the ThiI family.

Its subcellular location is the cytoplasm. It catalyses the reaction [ThiI sulfur-carrier protein]-S-sulfanyl-L-cysteine + a uridine in tRNA + 2 reduced [2Fe-2S]-[ferredoxin] + ATP + H(+) = [ThiI sulfur-carrier protein]-L-cysteine + a 4-thiouridine in tRNA + 2 oxidized [2Fe-2S]-[ferredoxin] + AMP + diphosphate. The catalysed reaction is [ThiS sulfur-carrier protein]-C-terminal Gly-Gly-AMP + S-sulfanyl-L-cysteinyl-[cysteine desulfurase] + AH2 = [ThiS sulfur-carrier protein]-C-terminal-Gly-aminoethanethioate + L-cysteinyl-[cysteine desulfurase] + A + AMP + 2 H(+). The protein operates within cofactor biosynthesis; thiamine diphosphate biosynthesis. In terms of biological role, catalyzes the ATP-dependent transfer of a sulfur to tRNA to produce 4-thiouridine in position 8 of tRNAs, which functions as a near-UV photosensor. Also catalyzes the transfer of sulfur to the sulfur carrier protein ThiS, forming ThiS-thiocarboxylate. This is a step in the synthesis of thiazole, in the thiamine biosynthesis pathway. The sulfur is donated as persulfide by IscS. The protein is Probable tRNA sulfurtransferase of Brevibacillus brevis (strain 47 / JCM 6285 / NBRC 100599).